The sequence spans 223 residues: Large ribosomal subunit protein bL21 (223 aa).

This sequence belongs to the bacterial ribosomal protein bL21 family. As to quaternary structure, part of the 50S ribosomal subunit. Contacts protein L20.

Its function is as follows. This protein binds to 23S rRNA in the presence of protein L20. The protein is Large ribosomal subunit protein bL21 of Mesorhizobium japonicum (strain LMG 29417 / CECT 9101 / MAFF 303099) (Mesorhizobium loti (strain MAFF 303099)).